A 455-amino-acid chain; its full sequence is Kynurenine 3-monooxygenase (455 aa).

The protein belongs to the aromatic-ring hydroxylase family. KMO subfamily. Requires FAD as cofactor.

The enzyme catalyses L-kynurenine + NADPH + O2 + H(+) = 3-hydroxy-L-kynurenine + NADP(+) + H2O. It participates in cofactor biosynthesis; NAD(+) biosynthesis; quinolinate from L-kynurenine: step 1/3. Its function is as follows. Catalyzes the hydroxylation of L-kynurenine (L-Kyn) to form 3-hydroxy-L-kynurenine (L-3OHKyn). Required for synthesis of quinolinic acid. In Xanthomonas euvesicatoria pv. vesicatoria (strain 85-10) (Xanthomonas campestris pv. vesicatoria), this protein is Kynurenine 3-monooxygenase.